Consider the following 726-residue polypeptide: ORC ubiquitin ligase 1 (726 aa).

The RING-type; degenerate zinc finger occupies cysteine 18 to arginine 56. Coiled-coil stretches lie at residues leucine 87–aspartate 129 and glutamate 155–isoleucine 270. Serine 210 bears the Phosphoserine mark. Disordered stretches follow at residues serine 276–alanine 334 and asparagine 436–serine 460. A compositionally biased stretch (basic and acidic residues) spans lysine 280–valine 290. A compositionally biased stretch (low complexity) spans serine 304–serine 318. A compositionally biased stretch (polar residues) spans arginine 319 to alanine 334. Residues aspartate 446–glutamate 457 are compositionally biased toward basic and acidic residues. A phosphoserine mark is found at serine 526, serine 553, serine 561, serine 568, and serine 570. Disordered stretches follow at residues serine 570–glutamate 602 and glutamine 687–serine 726. The span at glutamate 579 to glutamate 588 shows a compositional bias: basic and acidic residues. Polar residues predominate over residues leucine 589–glutamate 602. A compositionally biased stretch (low complexity) spans serine 713–serine 726. Phosphoserine occurs at positions 719 and 721.

As to quaternary structure, associates with ORC complex. Binds to chromatin; association is cell cycle-regulated, absent from mitotic chromosomes, is associated with chromatin from G1 and partially released from chromatin from mid S-phase. Auto-ubiquitinated.

The protein resides in the chromosome. It catalyses the reaction S-ubiquitinyl-[E2 ubiquitin-conjugating enzyme]-L-cysteine + [acceptor protein]-L-lysine = [E2 ubiquitin-conjugating enzyme]-L-cysteine + N(6)-ubiquitinyl-[acceptor protein]-L-lysine.. Its function is as follows. E3 ubiquitin ligase essential for DNA replication origin activation during S phase. Acts as a replication origin selector which selects the origins to be fired and catalyzes the multi-mono-ubiquitination of a subset of chromatin-bound ORC3 and ORC5 during S-phase. This is ORC ubiquitin ligase 1 from Homo sapiens (Human).